We begin with the raw amino-acid sequence, 686 residues long: Gamma-aminobutyric acid receptor alpha-like (686 aa).

Positions 1–58 (MCTMPATRDASGSGDASTDLIAARSLSSHQGQRSNLRIFKLLISCCLLMLCIYPNAWP) are cleaved as a signal peptide. The Extracellular segment spans residues 97 to 393 (SSWLTQSNNH…NFHLQRHMGN (297 aa)). Asparagine 108 carries an N-linked (GlcNAc...) asparagine glycan. A disulfide bridge links cysteine 233 with cysteine 247. N-linked (GlcNAc...) asparagine glycosylation is present at asparagine 292. 3 consecutive transmembrane segments (helical) span residues 394–414 (FLIQ…VSFW), 424–441 (VSLG…GLEA), and 456–476 (FFVF…AVVH). Topologically, residues 477-650 (YYTKYGSGEC…YNSVSKIDRA (174 aa)) are cytoplasmic. Positions 570-641 (KPPRADSDED…RRKGKRTPQY (72 aa)) are disordered. Positions 586–596 (QLRANEAPTTS) are enriched in polar residues. Over residues 597 to 609 (AAAAAAQAAAQAA) the composition is skewed to low complexity. A helical membrane pass occupies residues 651 to 671 (SRIVFPLLFILINVFYWYGYL).

The protein belongs to the ligand-gated ion channel (TC 1.A.9) family. Gamma-aminobutyric acid receptor (TC 1.A.9.5) subfamily. As to quaternary structure, generally pentameric. There are five types of GABA(A) receptor chains: alpha, beta, gamma, delta, and rho. Interacts with Lcch3 (beta chain).

It is found in the postsynaptic cell membrane. The protein localises to the cell membrane. Its function is as follows. GABA, an inhibitory neurotransmitter, mediates neuronal inhibition by binding to the GABA receptor and opening an integral chloride channel. May combine with the ligand-gated ion channel subunit Lcch3 to form cation-selective GABA-gated ion channels. This is Gamma-aminobutyric acid receptor alpha-like (Grd) from Drosophila melanogaster (Fruit fly).